The primary structure comprises 423 residues: UPF0229 protein Psyr_4632 (423 aa).

Residues 65-110 (HHGRGGKQTVVHPGNKEFTTGEHIARPQGGGGGKGPGKAGNSGEGM) are disordered. Residues 92-107 (QGGGGGKGPGKAGNSG) are compositionally biased toward gly residues.

The protein belongs to the UPF0229 family.

The protein is UPF0229 protein Psyr_4632 of Pseudomonas syringae pv. syringae (strain B728a).